Reading from the N-terminus, the 220-residue chain is 7-cyano-7-deazaguanine synthase (220 aa).

10–20 (FSGGQDSTTCL) contacts ATP. Zn(2+) is bound by residues cysteine 186, cysteine 195, cysteine 198, and cysteine 201.

This sequence belongs to the QueC family. As to quaternary structure, homodimer. Zn(2+) is required as a cofactor.

The catalysed reaction is 7-carboxy-7-deazaguanine + NH4(+) + ATP = 7-cyano-7-deazaguanine + ADP + phosphate + H2O + H(+). Its pathway is purine metabolism; 7-cyano-7-deazaguanine biosynthesis. Its function is as follows. Catalyzes the ATP-dependent conversion of 7-carboxy-7-deazaguanine (CDG) to 7-cyano-7-deazaguanine (preQ(0)). The sequence is that of 7-cyano-7-deazaguanine synthase from Bacillus anthracis (strain A0248).